The chain runs to 140 residues: MGAPALPQIWQLYLKNYRIATFKNWPFLEDCACTPERMAEAGFIHCPTENEPDLAQCFFCFKELEGWEPDDNPIEEHRKHSPGCAFLTVKKQMEELTVSEFLKLDRQRAKNKIAKETNNKQKEFEETAKTTRQSIEQLAA.

Residues 18-88 form a BIR repeat; it reads RIATFKNWPF…KHSPGCAFLT (71 aa). At Lys-23 the chain carries N6-acetyllysine. Phosphothreonine; by CDK1 and CDK15 is present on Thr-34. Phosphothreonine is present on Thr-48. Zn(2+)-binding residues include Cys-57, Cys-60, Glu-76, His-77, His-80, and Cys-84. An N6-acetyllysine mark is found at Lys-90, Lys-110, Lys-112, and Lys-115. The span at 113–129 shows a compositional bias: basic and acidic residues; sequence IAKETNNKQKEFEETAK. The interval 113–140 is disordered; the sequence is IAKETNNKQKEFEETAKTTRQSIEQLAA. At Thr-117 the chain carries Phosphothreonine; by AURKB. Residue Lys-129 is modified to N6-acetyllysine. Residues 130 to 140 show a composition bias toward polar residues; the sequence is TTRQSIEQLAA.

This sequence belongs to the IAP family. As to quaternary structure, monomer or homodimer. Exists as a homodimer in the apo state and as a monomer in the CPC-bound state. The monomer protects cells against apoptosis more efficiently than the dimer. Only the dimeric form is capable of enhancing tubulin stability in cells. When phosphorylated, interacts with LAMTOR5/HBXIP; the resulting complex binds pro-CASP9, as well as active CASP9, but much less efficiently. Component of the chromosomal passenger complex (CPC) composed of at least BIRC5/survivin, CDCA8/borealin, INCENP, AURKB or AURKC; in the complex forms a triple-helix bundle-based subcomplex with INCENP and CDCA8. Interacts with JTB. Interacts (via BIR domain) with histone H3 phosphorylated at 'Thr-3' (H3pT3). Interacts with EVI5. Interacts with GTP-bound RAN in both the S and M phases of the cell cycle. Interacts with USP9X. Interacts with tubulin. Interacts with BIRC2/c-IAP1. The acetylated form at Lys-129 interacts with STAT3. The monomeric form deacetylated at Lys-129 interacts with XPO1/CRM1. The monomeric form interacts with XIAP/BIRC4. Both the dimeric and monomeric form can interact with DIABLO/SMAC. Interacts with BIRC6/bruce. Interacts with FBXL7; this interaction facilitates the polyubiquitination and subsequent proteasomal degradation of BIRC5 by the SCF(FBXL7) E3 ubiquitin-protein ligase complex. Post-translationally, ubiquitinated by the Cul9-RING ubiquitin-protein ligase complex, leading to its degradation. Ubiquitination is required for centrosomal targeting. Deubiquitinated by USP35 or USP38; leading to stabilization. Acetylation at Lys-129 results in its homodimerization, while deacetylation promotes the formation of monomers which heterodimerize with XPO1/CRM1 which facilitates its nuclear export. The acetylated form represses STAT3 transactivation. The dynamic equilibrium between its acetylation and deacetylation at Lys-129 determines its interaction with XPO1/CRM1, its subsequent subcellular localization, and its ability to inhibit STAT3 transactivation. In terms of processing, in vitro phosphorylation at Thr-117 by AURKB prevents interaction with INCENP and localization to mitotic chromosomes. Phosphorylation at Thr-48 by CK2 is critical for its mitotic and anti-apoptotic activities. Phosphorylation at Thr-34 by CDK15 is critical for its anti-apoptotic activity.

Its subcellular location is the cytoplasm. It is found in the nucleus. The protein resides in the chromosome. The protein localises to the centromere. It localises to the cytoskeleton. Its subcellular location is the spindle. It is found in the kinetochore. The protein resides in the midbody. Multitasking protein that has dual roles in promoting cell proliferation and preventing apoptosis. Component of a chromosome passage protein complex (CPC) which is essential for chromosome alignment and segregation during mitosis and cytokinesis. Acts as an important regulator of the localization of this complex; directs CPC movement to different locations from the inner centromere during prometaphase to midbody during cytokinesis and participates in the organization of the center spindle by associating with polymerized microtubules. Involved in the recruitment of CPC to centromeres during early mitosis via association with histone H3 phosphorylated at 'Thr-3' (H3pT3) during mitosis. The complex with RAN plays a role in mitotic spindle formation by serving as a physical scaffold to help deliver the RAN effector molecule TPX2 to microtubules. May counteract a default induction of apoptosis in G2/M phase. The acetylated form represses STAT3 transactivation of target gene promoters. May play a role in neoplasia. Inhibitor of CASP3 and CASP7. Essential for the maintenance of mitochondrial integrity and function. This is Baculoviral IAP repeat-containing protein 5 (Birc5) from Mus musculus (Mouse).